The primary structure comprises 593 residues: ATP-dependent lipid A-core flippase (593 aa).

6 helical membrane-spanning segments follow: residues 33 to 53 (IGIV…EAGI), 75 to 95 (WYVP…QYTS), 137 to 157 (AIVF…VTLV), 164 to 184 (IFLL…VAVI), 262 to 282 (QPLT…IAVV), and 292 to 312 (GGFV…KHLI). The ABC transmembrane type-1 domain occupies 37 to 320 (VLAVVTMGVV…LIDVNQPLQR (284 aa)). Residues 352–586 (IEFRAVSFDY…GGLYAHLHRI (235 aa)) form the ABC transporter domain. An ATP-binding site is contributed by 386 to 393 (GPSGSGKT).

Belongs to the ABC transporter superfamily. Lipid exporter (TC 3.A.1.106) family. As to quaternary structure, homodimer.

The protein localises to the cell inner membrane. The catalysed reaction is ATP + H2O + lipid A-core oligosaccharideSide 1 = ADP + phosphate + lipid A-core oligosaccharideSide 2.. In terms of biological role, involved in lipopolysaccharide (LPS) biosynthesis. Translocates lipid A-core from the inner to the outer leaflet of the inner membrane. Transmembrane domains (TMD) form a pore in the inner membrane and the ATP-binding domain (NBD) is responsible for energy generation. The chain is ATP-dependent lipid A-core flippase from Burkholderia orbicola (strain AU 1054).